The sequence spans 81 residues: ATP synthase subunit c, chloroplastic (81 aa).

2 helical membrane passes run 3 to 23 (PLIS…ASIG) and 53 to 73 (LLLS…VALA).

Belongs to the ATPase C chain family. F-type ATPases have 2 components, F(1) - the catalytic core - and F(0) - the membrane proton channel. F(1) has five subunits: alpha(3), beta(3), gamma(1), delta(1), epsilon(1). F(0) has four main subunits: a(1), b(1), b'(1) and c(10-14). The alpha and beta chains form an alternating ring which encloses part of the gamma chain. F(1) is attached to F(0) by a central stalk formed by the gamma and epsilon chains, while a peripheral stalk is formed by the delta, b and b' chains.

It localises to the plastid. It is found in the chloroplast thylakoid membrane. In terms of biological role, f(1)F(0) ATP synthase produces ATP from ADP in the presence of a proton or sodium gradient. F-type ATPases consist of two structural domains, F(1) containing the extramembraneous catalytic core and F(0) containing the membrane proton channel, linked together by a central stalk and a peripheral stalk. During catalysis, ATP synthesis in the catalytic domain of F(1) is coupled via a rotary mechanism of the central stalk subunits to proton translocation. Key component of the F(0) channel; it plays a direct role in translocation across the membrane. A homomeric c-ring of between 10-14 subunits forms the central stalk rotor element with the F(1) delta and epsilon subunits. The chain is ATP synthase subunit c, chloroplastic from Angiopteris evecta (Mule's foot fern).